The primary structure comprises 314 residues: Replication initiation protein (314 aa).

This sequence belongs to the plasmid replication initiation factor family.

This protein is probably a specific topoisomerase involved in initiating replication. This protein is specifically required and may be rate-limiting for replication of the plasmid in vivo. The protein is Replication initiation protein (repC) of Staphylococcus aureus.